The following is a 442-amino-acid chain: Probable D-serine dehydratase (442 aa).

The residue at position 115 (lysine 115) is an N6-(pyridoxal phosphate)lysine.

The protein belongs to the serine/threonine dehydratase family. DsdA subfamily. It depends on pyridoxal 5'-phosphate as a cofactor.

It catalyses the reaction D-serine = pyruvate + NH4(+). The polypeptide is Probable D-serine dehydratase (Halalkalibacterium halodurans (strain ATCC BAA-125 / DSM 18197 / FERM 7344 / JCM 9153 / C-125) (Bacillus halodurans)).